Consider the following 185-residue polypeptide: Nuclear transcription factor Y subunit B-3 (185 aa).

Positions 1 to 36 (MADGPGSPGGGGGSHESGSPRGGGGGGGGGGGGGGV) are enriched in gly residues. Residues 1 to 39 (MADGPGSPGGGGGSHESGSPRGGGGGGGGGGGGGGVREQ) form a disordered region. Residues 43–49 (LPIANIS) mediate DNA binding. The segment at 70–81 (VQECVSEFISFI) is subunit association domain (SAD). Residues 145–164 (KDVLGSHGGSSSSAQGMGQQ) form a disordered region. A compositionally biased stretch (low complexity) spans 153–164 (GSSSSAQGMGQQ).

It belongs to the NFYB/HAP3 subunit family. In terms of assembly, heterotrimeric transcription factor composed of three components, NF-YA, NF-YB and NF-YC. NF-YB and NF-YC must interact and dimerize for NF-YA association and DNA binding. Ubiquitous.

The protein localises to the nucleus. Functionally, component of the NF-Y/HAP transcription factor complex. The NF-Y complex stimulates the transcription of various genes by recognizing and binding to a CCAAT motif in promoters. May regulate the expression of photosynthetic genes, and may be involved in chloroplast and amyloplast development. This Oryza sativa subsp. japonica (Rice) protein is Nuclear transcription factor Y subunit B-3 (NFYB3).